The chain runs to 703 residues: Fanconi anemia group B protein homolog (703 aa).

As to quaternary structure, belongs to the multisubunit FA complex composed of FANCA, FANCB, FANCC, FANCE, FANCF, FANCG, FANCL/PHF9 and FANCM.

It is found in the nucleus. In terms of biological role, DNA repair protein required for FANCD2 ubiquitination. This chain is Fanconi anemia group B protein homolog (Fancb), found in Mus musculus (Mouse).